The following is a 362-amino-acid chain: Chorismate synthase (362 aa).

The segment at 39–59 (ADLQGDLDRRKPGTSRYTTPR) is disordered. NADP(+) is bound by residues Arg-48 and Arg-54. FMN-binding positions include 125–127 (RSS), 238–239 (NA), Gly-278, 293–297 (KPTSS), and Arg-319.

Belongs to the chorismate synthase family. Homotetramer. Requires FMNH2 as cofactor.

The catalysed reaction is 5-O-(1-carboxyvinyl)-3-phosphoshikimate = chorismate + phosphate. It participates in metabolic intermediate biosynthesis; chorismate biosynthesis; chorismate from D-erythrose 4-phosphate and phosphoenolpyruvate: step 7/7. Functionally, catalyzes the anti-1,4-elimination of the C-3 phosphate and the C-6 proR hydrogen from 5-enolpyruvylshikimate-3-phosphate (EPSP) to yield chorismate, which is the branch point compound that serves as the starting substrate for the three terminal pathways of aromatic amino acid biosynthesis. This reaction introduces a second double bond into the aromatic ring system. This Aeromonas hydrophila subsp. hydrophila (strain ATCC 7966 / DSM 30187 / BCRC 13018 / CCUG 14551 / JCM 1027 / KCTC 2358 / NCIMB 9240 / NCTC 8049) protein is Chorismate synthase.